Consider the following 321-residue polypeptide: Fimbria adhesin protein (321 aa).

Residues 1 to 18 (MKKLTLFIGLMALGTTSA) form the signal peptide.

The protein belongs to the fimbrial protein family.

It localises to the fimbrium. This chain is Fimbria adhesin protein (mrkD), found in Klebsiella pneumoniae.